The chain runs to 53 residues: MLKFYLENVFHLIFFAKLPEAYAVSDPIVNVMPIIPLFFFLLAFVWQASVSFR.

A propeptide spanning residues 1–16 is cleaved from the precursor; that stretch reads MLKFYLENVFHLIFFA. A helical membrane pass occupies residues 28–48; it reads IVNVMPIIPLFFFLLAFVWQA.

The protein belongs to the PsbK family. As to quaternary structure, PSII is composed of 1 copy each of membrane proteins PsbA, PsbB, PsbC, PsbD, PsbE, PsbF, PsbH, PsbI, PsbJ, PsbK, PsbL, PsbM, PsbT, PsbX, PsbY, PsbZ, Psb30/Ycf12, at least 3 peripheral proteins of the oxygen-evolving complex and a large number of cofactors. It forms dimeric complexes.

The protein resides in the plastid. It is found in the chloroplast thylakoid membrane. Functionally, one of the components of the core complex of photosystem II (PSII). PSII is a light-driven water:plastoquinone oxidoreductase that uses light energy to abstract electrons from H(2)O, generating O(2) and a proton gradient subsequently used for ATP formation. It consists of a core antenna complex that captures photons, and an electron transfer chain that converts photonic excitation into a charge separation. This Huperzia lucidula (Shining clubmoss) protein is Photosystem II reaction center protein K.